Consider the following 189-residue polypeptide: Nucleoside triphosphate pyrophosphatase (189 aa).

The active-site Proton acceptor is D70.

Belongs to the Maf family. The cofactor is a divalent metal cation.

Its subcellular location is the cytoplasm. The catalysed reaction is a ribonucleoside 5'-triphosphate + H2O = a ribonucleoside 5'-phosphate + diphosphate + H(+). It carries out the reaction a 2'-deoxyribonucleoside 5'-triphosphate + H2O = a 2'-deoxyribonucleoside 5'-phosphate + diphosphate + H(+). Nucleoside triphosphate pyrophosphatase. May have a dual role in cell division arrest and in preventing the incorporation of modified nucleotides into cellular nucleic acids. The polypeptide is Nucleoside triphosphate pyrophosphatase (Xylella fastidiosa (strain 9a5c)).